We begin with the raw amino-acid sequence, 790 residues long: Lon protease (790 aa).

The Lon N-terminal domain maps to 13–209 (LPLFPIRNTV…RLTDHVAKEI (197 aa)). 362-369 (GPPGVGKT) contributes to the ATP binding site. Residues 598 to 779 (DNQVGITIGL…DQVLDIALAT (182 aa)) form the Lon proteolytic domain. Catalysis depends on residues Ser685 and Lys728.

Belongs to the peptidase S16 family. As to quaternary structure, homohexamer. Organized in a ring with a central cavity.

The protein resides in the cytoplasm. It carries out the reaction Hydrolysis of proteins in presence of ATP.. Functionally, ATP-dependent serine protease that mediates the selective degradation of mutant and abnormal proteins as well as certain short-lived regulatory proteins. Required for cellular homeostasis and for survival from DNA damage and developmental changes induced by stress. Degrades polypeptides processively to yield small peptide fragments that are 5 to 10 amino acids long. Binds to DNA in a double-stranded, site-specific manner. This chain is Lon protease, found in Orientia tsutsugamushi (strain Ikeda) (Rickettsia tsutsugamushi).